A 239-amino-acid chain; its full sequence is Pyridoxine 5'-phosphate synthase (239 aa).

A 3-amino-2-oxopropyl phosphate-binding site is contributed by asparagine 7. Residue 9–10 coordinates 1-deoxy-D-xylulose 5-phosphate; it reads DH. Arginine 18 is a binding site for 3-amino-2-oxopropyl phosphate. Histidine 43 serves as the catalytic Proton acceptor. Positions 45 and 50 each coordinate 1-deoxy-D-xylulose 5-phosphate. The Proton acceptor role is filled by glutamate 70. A 1-deoxy-D-xylulose 5-phosphate-binding site is contributed by threonine 100. Histidine 191 functions as the Proton donor in the catalytic mechanism. 3-amino-2-oxopropyl phosphate-binding positions include glycine 192 and 213 to 214; that span reads GH.

The protein belongs to the PNP synthase family. As to quaternary structure, homooctamer; tetramer of dimers.

It is found in the cytoplasm. It catalyses the reaction 3-amino-2-oxopropyl phosphate + 1-deoxy-D-xylulose 5-phosphate = pyridoxine 5'-phosphate + phosphate + 2 H2O + H(+). It participates in cofactor biosynthesis; pyridoxine 5'-phosphate biosynthesis; pyridoxine 5'-phosphate from D-erythrose 4-phosphate: step 5/5. Catalyzes the complicated ring closure reaction between the two acyclic compounds 1-deoxy-D-xylulose-5-phosphate (DXP) and 3-amino-2-oxopropyl phosphate (1-amino-acetone-3-phosphate or AAP) to form pyridoxine 5'-phosphate (PNP) and inorganic phosphate. The sequence is that of Pyridoxine 5'-phosphate synthase from Geotalea daltonii (strain DSM 22248 / JCM 15807 / FRC-32) (Geobacter daltonii).